A 148-amino-acid chain; its full sequence is Ribonuclease pancreatic (148 aa).

The first 25 residues, 1-25 (MGLEKSLLLLPLLVLVLGCVQPSLG), serve as a signal peptide directing secretion. Positions 32 and 35 each coordinate substrate. His37 functions as the Proton acceptor in the catalytic mechanism. 4 disulfide bridges follow: Cys50/Cys108, Cys64/Cys119, Cys82/Cys134, and Cys89/Cys96. Residues 65–69 (KPVNT) and Lys90 each bind substrate. His143 serves as the catalytic Proton donor.

It belongs to the pancreatic ribonuclease family. In terms of assembly, monomer. Interacts with and forms tight 1:1 complexes with RNH1. Dimerization of two such complexes may occur. Interaction with RNH1 inhibits this protein. As to expression, pancreas.

The protein localises to the secreted. The enzyme catalyses an [RNA] containing cytidine + H2O = an [RNA]-3'-cytidine-3'-phosphate + a 5'-hydroxy-ribonucleotide-3'-[RNA].. The catalysed reaction is an [RNA] containing uridine + H2O = an [RNA]-3'-uridine-3'-phosphate + a 5'-hydroxy-ribonucleotide-3'-[RNA].. Its function is as follows. Endonuclease that catalyzes the cleavage of RNA on the 3' side of pyrimidine nucleotides. Acts on single-stranded and double-stranded RNA. This is Ribonuclease pancreatic (RNASE1) from Gerbillus nigeriae (Nigerian gerbil).